Consider the following 264-residue polypeptide: ECF RNA polymerase sigma factor BldN (264 aa).

Residues 1–87 form a not required for transcription in vitro region; that stretch reads MYPHVGVDAS…PAADSDSARM (87 aa). The disordered stretch occupies residues 64–83; it reads RSSSSGAAATTHRRPAADSD. The sigma-70 factor domain-2 stretch occupies residues 105–172; it reads LYDQYSDTVY…LVADHFKSSR (68 aa). Residues 129–132 carry the Polymerase core binding motif; sequence DLTS. The tract at residues 204–255 is sigma-70 factor domain-4; it reads ALLDAVRRLNPQQQECVTLRFLQGLSVAETARVMGKNEGAIKTLQYRAVRTL.

Belongs to the sigma-70 factor family. ECF subfamily. In terms of processing, two forms of protein exist; a 35 kDa form in early growth and a 28 kDa form seen in later stages (at protein level). In liquid culture the larger form accumulates to higher level than on solid media. The shorter form results from processing just upstream of Met-87; the exact position is unknown. There are 4 possible start codons; mutation of the first prevents protein production while mutation of the other 3 (Val-44, Met-87 and Met-88) permits production of both forms. Introduction of stop codons between the first and second, or second and third possible start codons also prevents protein production, corroborating that the annotated start codon is the correct one.

Its function is as follows. Sigma factors are initiation factors that promote the attachment of RNA polymerase to specific initiation sites and are then released. Extracytoplasmic function (ECF) sigma factors are usually held in an inactive form by an anti-sigma factor until released. ECF sigma factor involved in aerial mycelium formation, required for translation from the bldMp1 promoter. Expressed as a preprotein; processing and accumulation of the mature protein starts as aerial mycelium formation and sporulation commence. Activates expression of about 17 genes, including those for rdlA and most of the chaplins (chpA to chpH); chaplin activation is indirect. This is ECF RNA polymerase sigma factor BldN from Streptomyces coelicolor (strain ATCC BAA-471 / A3(2) / M145).